The chain runs to 305 residues: Tyrosine recombinase XerC (305 aa).

One can recognise a Core-binding (CB) domain in the interval 4 to 95 (TSIQALINKW…AVKNFYRFLE (92 aa)). Residues 116 to 298 (LLPKALSEDD…SIKHLEAVYT (183 aa)) form the Tyr recombinase domain. Residues Arg-159, Lys-182, His-250, Arg-253, and His-276 contribute to the active site. Tyr-285 serves as the catalytic O-(3'-phospho-DNA)-tyrosine intermediate.

This sequence belongs to the 'phage' integrase family. XerC subfamily. As to quaternary structure, forms a cyclic heterotetrameric complex composed of two molecules of XerC and two molecules of XerD.

The protein localises to the cytoplasm. Functionally, site-specific tyrosine recombinase, which acts by catalyzing the cutting and rejoining of the recombining DNA molecules. The XerC-XerD complex is essential to convert dimers of the bacterial chromosome into monomers to permit their segregation at cell division. It also contributes to the segregational stability of plasmids. The protein is Tyrosine recombinase XerC of Rickettsia rickettsii (strain Iowa).